A 309-amino-acid chain; its full sequence is Taste receptor type 2 member 8 (309 aa).

Over Met-1–Asn-7 the chain is Extracellular. Residues Ile-8–Ala-28 form a helical membrane-spanning segment. Residues Leu-29–Asn-50 are Cytoplasmic-facing. The chain crosses the membrane as a helical span at residues Leu-51 to Val-71. The Extracellular portion of the chain corresponds to Tyr-72–Gln-82. A helical transmembrane segment spans residues Ile-83–Leu-103. Topologically, residues Asn-104–Arg-131 are cytoplasmic. A helical membrane pass occupies residues Trp-132–Leu-152. At Ser-153–Thr-184 the chain is on the extracellular side. Asn-167 carries N-linked (GlcNAc...) asparagine glycosylation. The helical transmembrane segment at Leu-185–Val-205 threads the bilayer. The Cytoplasmic portion of the chain corresponds to Arg-206 to Ser-239. The helical transmembrane segment at Phe-240–Met-260 threads the bilayer. Residues Thr-261–Ala-266 lie on the Extracellular side of the membrane. Residues Val-267–Val-287 traverse the membrane as a helical segment. The Cytoplasmic segment spans residues Leu-288–Ile-309.

This sequence belongs to the G-protein coupled receptor T2R family.

Its subcellular location is the membrane. Its function is as follows. Receptor that may play a role in the perception of bitterness and is gustducin-linked. May play a role in sensing the chemical composition of the gastrointestinal content. The activity of this receptor may stimulate alpha gustducin, mediate PLC-beta-2 activation and lead to the gating of TRPM5. The protein is Taste receptor type 2 member 8 (TAS2R8) of Gorilla gorilla gorilla (Western lowland gorilla).